Here is a 275-residue protein sequence, read N- to C-terminus: Release factor glutamine methyltransferase (275 aa).

Residues 114–118 (GTGSG), Asp-137, Trp-165, and Asn-180 contribute to the S-adenosyl-L-methionine site. Residue 180-183 (NPPY) coordinates substrate.

This sequence belongs to the protein N5-glutamine methyltransferase family. PrmC subfamily.

The enzyme catalyses L-glutaminyl-[peptide chain release factor] + S-adenosyl-L-methionine = N(5)-methyl-L-glutaminyl-[peptide chain release factor] + S-adenosyl-L-homocysteine + H(+). Its function is as follows. Methylates the class 1 translation termination release factors RF1/PrfA and RF2/PrfB on the glutamine residue of the universally conserved GGQ motif. The sequence is that of Release factor glutamine methyltransferase from Xylella fastidiosa (strain 9a5c).